Reading from the N-terminus, the 224-residue chain is DNA mismatch repair protein MutH (224 aa).

This sequence belongs to the MutH family.

Its subcellular location is the cytoplasm. In terms of biological role, sequence-specific endonuclease that cleaves unmethylated GATC sequences. It is involved in DNA mismatch repair. This chain is DNA mismatch repair protein MutH, found in Shewanella amazonensis (strain ATCC BAA-1098 / SB2B).